We begin with the raw amino-acid sequence, 82 residues long: Large ribosomal subunit protein bL27 (82 aa).

The disordered stretch occupies residues 1–20; that stretch reads MAHKKGASSSRNGRDSNPQY. Polar residues predominate over residues 7 to 19; the sequence is ASSSRNGRDSNPQ.

Belongs to the bacterial ribosomal protein bL27 family.

The protein is Large ribosomal subunit protein bL27 of Bifidobacterium longum (strain NCC 2705).